The following is a 419-amino-acid chain: Probable dual-specificity RNA methyltransferase RlmN (419 aa).

Residues 1–21 (MTAESDSPDGPVSAGTGRPVR) form a disordered region. E124 acts as the Proton acceptor in catalysis. The 240-residue stretch at 130 to 369 (YPDRATVCVS…ATTVRDTRGR (240 aa)) folds into the Radical SAM core domain. A disulfide bridge links C137 with C375. Positions 144, 148, and 151 each coordinate [4Fe-4S] cluster. S-adenosyl-L-methionine contacts are provided by residues 199 to 200 (GE), S233, 256 to 258 (SLH), and N332. Residue C375 is the S-methylcysteine intermediate of the active site. The segment at 383–419 (AGRARRVESARPVESARPVGVAGAASGSPAHGSRVLR) is disordered. The span at 397-419 (SARPVGVAGAASGSPAHGSRVLR) shows a compositional bias: low complexity.

Belongs to the radical SAM superfamily. RlmN family. [4Fe-4S] cluster serves as cofactor.

It is found in the cytoplasm. The catalysed reaction is adenosine(2503) in 23S rRNA + 2 reduced [2Fe-2S]-[ferredoxin] + 2 S-adenosyl-L-methionine = 2-methyladenosine(2503) in 23S rRNA + 5'-deoxyadenosine + L-methionine + 2 oxidized [2Fe-2S]-[ferredoxin] + S-adenosyl-L-homocysteine. It catalyses the reaction adenosine(37) in tRNA + 2 reduced [2Fe-2S]-[ferredoxin] + 2 S-adenosyl-L-methionine = 2-methyladenosine(37) in tRNA + 5'-deoxyadenosine + L-methionine + 2 oxidized [2Fe-2S]-[ferredoxin] + S-adenosyl-L-homocysteine. Specifically methylates position 2 of adenine 2503 in 23S rRNA and position 2 of adenine 37 in tRNAs. The sequence is that of Probable dual-specificity RNA methyltransferase RlmN from Frankia alni (strain DSM 45986 / CECT 9034 / ACN14a).